The chain runs to 409 residues: Elongation factor Tu, chloroplastic (409 aa).

The 205-residue stretch at 10-214 folds into the tr-type G domain; it reads KPHVNIGTIG…TVDAYIPTPE (205 aa). The segment at 19 to 26 is G1; the sequence is GHVDHGKT. 19–26 is a GTP binding site; sequence GHVDHGKT. Threonine 26 provides a ligand contact to Mg(2+). Residues 60 to 64 form a G2 region; sequence GITIN. The segment at 81 to 84 is G3; the sequence is DCPG. GTP-binding positions include 81 to 85 and 136 to 139; these read DCPGH and NKED. Residues 136 to 139 are G4; sequence NKED. The G5 stretch occupies residues 174 to 176; it reads SAL.

Belongs to the TRAFAC class translation factor GTPase superfamily. Classic translation factor GTPase family. EF-Tu/EF-1A subfamily.

It is found in the plastid. The protein localises to the chloroplast. The catalysed reaction is GTP + H2O = GDP + phosphate + H(+). Its function is as follows. GTP hydrolase that promotes the GTP-dependent binding of aminoacyl-tRNA to the A-site of ribosomes during protein biosynthesis. The sequence is that of Elongation factor Tu, chloroplastic (tufA) from Pleurastrum terricola (Filamentous green alga).